Reading from the N-terminus, the 327-residue chain is Annexin A8 (327 aa).

4 Annexin repeats span residues 21–92 (FNPV…ALMY), 93–164 (PPYR…CLLQ), 177–249 (GLAL…TIVK), and 253–324 (NLHC…SLVG). Residues Met-266, Gly-268, Gly-270, and Asp-310 each coordinate Ca(2+).

The protein belongs to the annexin family.

In terms of biological role, this protein is an anticoagulant protein that acts as an indirect inhibitor of the thromboplastin-specific complex, which is involved in the blood coagulation cascade. This Oryctolagus cuniculus (Rabbit) protein is Annexin A8 (ANXA8).